The sequence spans 319 residues: NH(3)-dependent NAD(+) synthetase (319 aa).

33–40 (GLSGGIDS) provides a ligand contact to ATP. Aspartate 39 lines the Mg(2+) pocket. Arginine 169 provides a ligand contact to deamido-NAD(+). Position 189 (threonine 189) interacts with ATP. Glutamate 194 is a Mg(2+) binding site. Deamido-NAD(+) is bound by residues lysine 202 and aspartate 209. ATP-binding residues include lysine 218 and threonine 240.

Belongs to the NAD synthetase family. As to quaternary structure, homodimer.

The enzyme catalyses deamido-NAD(+) + NH4(+) + ATP = AMP + diphosphate + NAD(+) + H(+). The protein operates within cofactor biosynthesis; NAD(+) biosynthesis; NAD(+) from deamido-NAD(+) (ammonia route): step 1/1. Its function is as follows. Catalyzes the ATP-dependent amidation of deamido-NAD to form NAD. Uses ammonia as a nitrogen source. The protein is NH(3)-dependent NAD(+) synthetase of Mesorhizobium japonicum (strain LMG 29417 / CECT 9101 / MAFF 303099) (Mesorhizobium loti (strain MAFF 303099)).